A 335-amino-acid chain; its full sequence is Anthranilate phosphoribosyltransferase (335 aa).

5-phospho-alpha-D-ribose 1-diphosphate-binding positions include Gly-79, 82 to 83, Ser-87, 89 to 92, 107 to 115, and Ser-119; these read GD, NIST, and KHGNRSITS. Position 79 (Gly-79) interacts with anthranilate. A Mg(2+)-binding site is contributed by Ser-91. Asn-110 contributes to the anthranilate binding site. An anthranilate-binding site is contributed by Arg-165. Mg(2+) contacts are provided by Asp-224 and Glu-225.

This sequence belongs to the anthranilate phosphoribosyltransferase family. Homodimer. The cofactor is Mg(2+).

The catalysed reaction is N-(5-phospho-beta-D-ribosyl)anthranilate + diphosphate = 5-phospho-alpha-D-ribose 1-diphosphate + anthranilate. It participates in amino-acid biosynthesis; L-tryptophan biosynthesis; L-tryptophan from chorismate: step 2/5. Its function is as follows. Catalyzes the transfer of the phosphoribosyl group of 5-phosphorylribose-1-pyrophosphate (PRPP) to anthranilate to yield N-(5'-phosphoribosyl)-anthranilate (PRA). This is Anthranilate phosphoribosyltransferase from Lactococcus lactis subsp. cremoris (strain MG1363).